A 174-amino-acid polypeptide reads, in one-letter code: Crossover junction endodeoxyribonuclease RuvC (174 aa).

Residues D8, E67, and D139 contribute to the active site. Residues D8, E67, and D139 each coordinate Mg(2+).

It belongs to the RuvC family. As to quaternary structure, homodimer which binds Holliday junction (HJ) DNA. The HJ becomes 2-fold symmetrical on binding to RuvC with unstacked arms; it has a different conformation from HJ DNA in complex with RuvA. In the full resolvosome a probable DNA-RuvA(4)-RuvB(12)-RuvC(2) complex forms which resolves the HJ. The cofactor is Mg(2+).

It is found in the cytoplasm. It catalyses the reaction Endonucleolytic cleavage at a junction such as a reciprocal single-stranded crossover between two homologous DNA duplexes (Holliday junction).. In terms of biological role, the RuvA-RuvB-RuvC complex processes Holliday junction (HJ) DNA during genetic recombination and DNA repair. Endonuclease that resolves HJ intermediates. Cleaves cruciform DNA by making single-stranded nicks across the HJ at symmetrical positions within the homologous arms, yielding a 5'-phosphate and a 3'-hydroxyl group; requires a central core of homology in the junction. The consensus cleavage sequence is 5'-(A/T)TT(C/G)-3'. Cleavage occurs on the 3'-side of the TT dinucleotide at the point of strand exchange. HJ branch migration catalyzed by RuvA-RuvB allows RuvC to scan DNA until it finds its consensus sequence, where it cleaves and resolves the cruciform DNA. The protein is Crossover junction endodeoxyribonuclease RuvC of Pseudomonas syringae pv. syringae (strain B728a).